A 331-amino-acid polypeptide reads, in one-letter code: Holliday junction branch migration complex subunit RuvB (331 aa).

The tract at residues 4–182 (KDILQSSECI…FGIPMHLEFY (179 aa)) is large ATPase domain (RuvB-L). Residues arginine 22, glycine 63, lysine 66, threonine 67, threonine 68, 129-131 (EDF), arginine 172, tyrosine 182, and arginine 219 each bind ATP. Mg(2+) is bound at residue threonine 67. The tract at residues 183–253 (STEELTKVIK…FADQALLRLG (71 aa)) is small ATPAse domain (RuvB-S). The segment at 256–331 (KLGLDRQDIK…SYLNEQTYNM (76 aa)) is head domain (RuvB-H). Residues arginine 309 and arginine 314 each coordinate DNA.

Belongs to the RuvB family. As to quaternary structure, homohexamer. Forms an RuvA(8)-RuvB(12)-Holliday junction (HJ) complex. HJ DNA is sandwiched between 2 RuvA tetramers; dsDNA enters through RuvA and exits via RuvB. An RuvB hexamer assembles on each DNA strand where it exits the tetramer. Each RuvB hexamer is contacted by two RuvA subunits (via domain III) on 2 adjacent RuvB subunits; this complex drives branch migration. In the full resolvosome a probable DNA-RuvA(4)-RuvB(12)-RuvC(2) complex forms which resolves the HJ.

The protein resides in the cytoplasm. The catalysed reaction is ATP + H2O = ADP + phosphate + H(+). The RuvA-RuvB-RuvC complex processes Holliday junction (HJ) DNA during genetic recombination and DNA repair, while the RuvA-RuvB complex plays an important role in the rescue of blocked DNA replication forks via replication fork reversal (RFR). RuvA specifically binds to HJ cruciform DNA, conferring on it an open structure. The RuvB hexamer acts as an ATP-dependent pump, pulling dsDNA into and through the RuvAB complex. RuvB forms 2 homohexamers on either side of HJ DNA bound by 1 or 2 RuvA tetramers; 4 subunits per hexamer contact DNA at a time. Coordinated motions by a converter formed by DNA-disengaged RuvB subunits stimulates ATP hydrolysis and nucleotide exchange. Immobilization of the converter enables RuvB to convert the ATP-contained energy into a lever motion, pulling 2 nucleotides of DNA out of the RuvA tetramer per ATP hydrolyzed, thus driving DNA branch migration. The RuvB motors rotate together with the DNA substrate, which together with the progressing nucleotide cycle form the mechanistic basis for DNA recombination by continuous HJ branch migration. Branch migration allows RuvC to scan DNA until it finds its consensus sequence, where it cleaves and resolves cruciform DNA. This Ehrlichia ruminantium (strain Gardel) protein is Holliday junction branch migration complex subunit RuvB.